The chain runs to 198 residues: MHYPEPISKLIDSFMKLPGIGPKTAQRLAFHTLDMKEDDVVQFAKALVDVKRELTYCSVCGHITENDPCYICEDKQRDRSVICVVEDDKDVIAMEKMREYKGLYHVLHGSISPMDGIGPEDINIPSLIERLKNDEVSELILAMNPNLEGESTAMYISRLVKPIGIKVTRLAQGLSVGGDLEYADEVTLSKAIAGRTEM.

The segment at 57–72 adopts a C4-type zinc-finger fold; the sequence is CSVCGHITENDPCYIC. One can recognise a Toprim domain in the interval 80–175; the sequence is SVICVVEDDK…KVTRLAQGLS (96 aa).

Belongs to the RecR family.

Its function is as follows. May play a role in DNA repair. It seems to be involved in an RecBC-independent recombinational process of DNA repair. It may act with RecF and RecO. This chain is Recombination protein RecR, found in Staphylococcus aureus (strain MSSA476).